A 364-amino-acid polypeptide reads, in one-letter code: 3-isopropylmalate dehydrogenase (364 aa).

Position 79-90 (79-90 (GPKWGTGSVRPE)) interacts with NAD(+). Substrate contacts are provided by Arg-97, Arg-107, Arg-136, and Asp-225. Positions 225, 250, and 254 each coordinate Mg(2+). An NAD(+)-binding site is contributed by 289-300 (GSAPDLPKNKVN).

This sequence belongs to the isocitrate and isopropylmalate dehydrogenases family. As to quaternary structure, homodimer. Mg(2+) is required as a cofactor. The cofactor is Mn(2+).

Its subcellular location is the cytoplasm. The catalysed reaction is (2R,3S)-3-isopropylmalate + NAD(+) = 4-methyl-2-oxopentanoate + CO2 + NADH. It participates in amino-acid biosynthesis; L-leucine biosynthesis; L-leucine from 3-methyl-2-oxobutanoate: step 3/4. Its function is as follows. Catalyzes the oxidation of 3-carboxy-2-hydroxy-4-methylpentanoate (3-isopropylmalate) to 3-carboxy-4-methyl-2-oxopentanoate. The product decarboxylates to 4-methyl-2 oxopentanoate. In Saccharomyces cerevisiae (strain ATCC 204508 / S288c) (Baker's yeast), this protein is 3-isopropylmalate dehydrogenase (LEU2).